Here is a 1700-residue protein sequence, read N- to C-terminus: Ras-responsive element-binding protein 1 (1700 aa).

Residues 31–63 (TENGGSPQGIKSPMKPPGPNRIGRRNQETKEEK) are disordered. Phosphoserine is present on residues serine 36 and serine 42. 3 C2H2-type zinc fingers span residues 66 to 88 (YNCP…IRQH), 97 to 119 (HACS…MLVH), and 125 to 147 (YKCT…MKIH). Positions 146–195 (IHEKDTNSTTAAAPPSPLKRRRLSSKRKLSHDAESEDPGPAKKMVEDGQS) are disordered. Serine 161 carries the phosphoserine modification. Basic residues predominate over residues 163–174 (LKRRRLSSKRKL). 2 positions are modified to phosphoserine: serine 175 and serine 180. Residues 184-195 (GPAKKMVEDGQS) show a composition bias toward basic and acidic residues. Residues 206–228 (FHCPVCFKEFVCKYELETHMETH) form a C2H2-type 4 zinc finger. Residue serine 229 is modified to Phosphoserine. C2H2-type zinc fingers lie at residues 233–256 (LRCD…ALVH) and 314–336 (FVCD…RQSH). Residues lysine 433, lysine 500, lysine 549, lysine 564, lysine 591, and lysine 611 each participate in a glycyl lysine isopeptide (Lys-Gly) (interchain with G-Cter in SUMO2) cross-link. Residue lysine 613 forms a Glycyl lysine isopeptide (Lys-Gly) (interchain with G-Cter in SUMO1); alternate linkage. Residue lysine 613 forms a Glycyl lysine isopeptide (Lys-Gly) (interchain with G-Cter in SUMO2); alternate linkage. Residue lysine 622 forms a Glycyl lysine isopeptide (Lys-Gly) (interchain with G-Cter in SUMO2) linkage. C2H2-type zinc fingers lie at residues 641–663 (YPCR…VRSH), 669–691 (YQCN…IRTH), 697–720 (YICK…RKKH), 751–782 (TVCR…GGCH), and 788–813 (FECK…QHLH). Residues lysine 855, lysine 883, and lysine 911 each participate in a glycyl lysine isopeptide (Lys-Gly) (interchain with G-Cter in SUMO2) cross-link. 2 disordered regions span residues 939–991 (IPKS…SLET) and 1092–1177 (ADPG…AVDL). Residues 944–961 (KKGDKDTVVPSDAKKPEP) show a composition bias toward basic and acidic residues. Serine 970 carries the phosphoserine modification. The segment covering 1097–1111 (SITSSNTVATDSPGS) has biased composition (polar residues). 3 positions are modified to phosphoserine: serine 1125, serine 1137, and serine 1138. The span at 1137-1146 (SSPEEALPTE) shows a compositional bias: low complexity. Residues 1155 to 1165 (SRKRGRKRGLR) are compositionally biased toward basic residues. Residues serine 1172, serine 1179, serine 1180, and serine 1230 each carry the phosphoserine modification. Disordered regions lie at residues 1195 to 1235 (TNKF…AEDR), 1273 to 1368 (HTDS…QSLD), 1383 to 1521 (SEAG…RKKV), and 1564 to 1670 (VRHQ…SPAA). The C2H2-type 12 zinc-finger motif lies at 1251–1273 (INCPHCPRVFPWASSLQRHMLTH). The span at 1273-1285 (HTDSQSDTDTLTT) shows a compositional bias: low complexity. Over residues 1327–1346 (SEEEEEKETEENPEPEEECR) the composition is skewed to acidic residues. Residues 1400 to 1422 (HACDTCGKNFKFLGTLSRHKKAH) form a C2H2-type 13 zinc finger. Phosphoserine occurs at positions 1450 and 1452. Residues 1492 to 1507 (TAEKRGDGDKRPKTDS) are compositionally biased toward basic and acidic residues. 2 C2H2-type zinc fingers span residues 1520-1542 (KVCS…MRSH) and 1548-1570 (YKCQ…QRIH). Over residues 1564-1580 (VRHQRIHQKARHSKHHG) the composition is skewed to basic residues. Phosphoserine occurs at positions 1593 and 1606. Low complexity predominate over residues 1645–1660 (AEQAAEPSAPKEQASP). Serine 1667 carries the phosphoserine modification.

Belongs to the krueppel C2H2-type zinc-finger protein family. As to quaternary structure, interacts with NEUROD1. Interacts with AR. As to expression, expressed in splenic B-cells.

The protein resides in the nucleus speckle. Functionally, transcription factor that binds specifically to the RAS-responsive elements (RRE) of gene promoters. Represses the angiotensinogen gene. Negatively regulates the transcriptional activity of AR. Potentiates the transcriptional activity of NEUROD1. Binds specifically to the allelic variant of the CDKN2A promoter present in Balb/c mice, which leads to a down-regulation of CDKN2A expression in this strain, and, as a consequence, to an elevated susceptibility to pristane-induced tumors. Promotes brown adipocyte differentiation. May be involved in Ras/Raf-mediated cell differentiation by enhancing calcitonin expression. This chain is Ras-responsive element-binding protein 1 (Rreb1), found in Mus musculus (Mouse).